Consider the following 464-residue polypeptide: E3 ubiquitin-protein ligase parkin (464 aa).

The Ubiquitin-like domain occupies 1–76 (MIVFVRFNSS…VHIVQRPRRR (76 aa)). Ser-65 is modified (phosphoserine; by PINK1). Residues 70 to 96 (VQRPRRRSHETNASGGDEPQSTSEGSI) are disordered. Residues 77–236 (SHETNASGGD…LITSNRRSIP (160 aa)) form a necessary for PINK1-dependent localization to mitochondria region. At Thr-80 the chain carries Phosphothreonine. Residues 80 to 96 (TNASGGDEPQSTSEGSI) show a composition bias toward polar residues. The RING-type 0; atypical zinc-finger motif lies at 140–224 (PTYNSFFIYC…PTSDKDTSVA (85 aa)). Phosphothreonine; by PINK1 is present on Thr-174. Residues 203 to 237 (TRAEFFFKCGAHPTSDKDTSVALNLITSNRRSIPC) form an SYT11 binding 1 region. Phosphothreonine is present on Thr-216. Positions 233-464 (RSIPCIACTD…ACMGDHWFDV (232 aa)) are TRIAD supradomain. Zn(2+) contacts are provided by Cys-237, Cys-240, Cys-252, His-256, Cys-259, Cys-262, Cys-288, Cys-292, Cys-331, and Cys-336. The segment at 237–292 (CIACTDVRSPVLVFQCNHRHVICLDCFHLYCVTRLNDRQFVHDAQLGYSLPCVAGC) adopts an RING-type 1 zinc-finger fold. The segment at 256 to 292 (HVICLDCFHLYCVTRLNDRQFVHDAQLGYSLPCVAGC) is SYT11 binding 2. The IBR-type zinc-finger motif lies at 312-376 (TRYQQYGAEE…CKEAYHEGDC (65 aa)). Residue Lys-348 forms a Glycyl lysine isopeptide (Lys-Gly) (interchain with G-Cter in ISG15) linkage. Zn(2+) contacts are provided by Cys-351, Cys-359, Cys-364, and Cys-367. Lys-368 is covalently cross-linked (Glycyl lysine isopeptide (Lys-Gly) (interchain with G-Cter in ISG15)). Residues His-372 and Cys-376 each contribute to the Zn(2+) site. The tract at residues 377–409 (DSLLEPSGATSQAYRVDKRAAEQARWEEASKET) is REP. Residues Cys-417 and Cys-420 each contribute to the Zn(2+) site. An RING-type 2; atypical zinc finger spans residues 417–448 (CPRCNVPIEKNGGCMHMKCPQPQCKLEWCWNC). Cys-430 is an active-site residue. 6 residues coordinate Zn(2+): Cys-435, Cys-440, Cys-445, Cys-448, Cys-456, and His-460.

Belongs to the RBR family. Parkin subfamily. In terms of assembly, forms an E3 ubiquitin ligase complex with UBE2L3 or UBE2L6. Mediates 'Lys-63'-linked polyubiquitination by associating with UBE2V1. Part of a SCF-like complex, consisting of PRKN, CUL1 and FBXW7. Interacts with SNCAIP. Binds to the C2A and C2B domains of SYT11. Interacts and regulates the turnover of SEPTIN5. Part of a complex, including STUB1, HSP70 and GPR37. The amount of STUB1 in the complex increases during ER stress. STUB1 promotes the dissociation of HSP70 from PRKN and GPR37, thus facilitating PRKN-mediated GPR37 ubiquitination. HSP70 transiently associates with unfolded GPR37 and inhibits the E3 activity of PRKN, whereas, STUB1 enhances the E3 activity of PRKN through promotion of dissociation of HSP70 from PRKN-GPR37 complexes. Interacts with PSMD4 and PACRG. Interacts with LRRK2. Interacts with RANBP2. Interacts with SUMO1 but not SUMO2, which promotes nuclear localization and autoubiquitination. Interacts (via first RING-type domain) with AIMP2 (via N-terminus). Interacts with PSMA7 and RNF41. Interacts with PINK1. Forms a complex with PINK1 and PARK7. Interacts with CHPF, the interaction with isoform 2 may facilitate PRKN transport into the mitochondria. Interacts with MFN2 (phosphorylated), promotes PRKN localization in dysfunctional depolarized mitochondria. Interacts with FBXO7; this promotes translocation to dysfunctional depolarized mitochondria. Interacts with ZNF746. Interacts with heat shock protein 70 family members, including HSPA1L, HSPA1A and HSPA8; interaction HSPA1L promotes translocation to damaged mitochondria. Interacts with BAG4 and, to a lesser extent, BAG5; interaction with BAG4 inhibits translocation to damaged mitochondria. Forms a complex with PRKN and PARK7. Interacts with AMBRA1. In terms of processing, auto-ubiquitinates in an E2-dependent manner leading to its own degradation. Also polyubiquitinated by RNF41 for proteasomal degradation. Post-translationally, S-nitrosylated. Phosphorylated. Activation requires phosphorylation at Ser-65 by PINK1 and binding to PINK1 phosphorylated ubiquitin. Phosphorylation at Thr-174 by PINK1 and at Thr-216 is important for mitochondrial localization. In terms of tissue distribution, expressed in all subdivisions of the brain (at protein level). Highly expressed in brainstem, cranial nerve, pontine, cerebellar nuclei, indusium griseum, nuclei reticularis, strata oriens and laccunosum moleculare of the hippocampal CA2 region. Low levels were found in the telencephalon and diencephalon. Expressed in heart, liver, skeletal muscle, kidney and testis.

The protein localises to the cytoplasm. Its subcellular location is the cytosol. The protein resides in the nucleus. It localises to the endoplasmic reticulum. It is found in the mitochondrion. The protein localises to the mitochondrion outer membrane. Its subcellular location is the cell projection. The protein resides in the neuron projection. It localises to the postsynaptic density. It is found in the presynapse. The catalysed reaction is [E2 ubiquitin-conjugating enzyme]-S-ubiquitinyl-L-cysteine + [acceptor protein]-L-lysine = [E2 ubiquitin-conjugating enzyme]-L-cysteine + [acceptor protein]-N(6)-ubiquitinyl-L-lysine.. It functions in the pathway protein modification; protein ubiquitination. Its activity is regulated as follows. In the autoinhibited state the side chain of Phe-462 inserts into a hydrophobic groove in RING-0, occluding the ubiquitin acceptor site Cys-430, whereas the REP repressor element binds RING-1 and blocks its E2-binding site. Activation of PRKN requires 2 steps: (1) phosphorylation at Ser-65 by PINK1 and (2) binding to phosphorylated ubiquitin, leading to unlock repression of the catalytic Cys-430 by the RING-0 region via an allosteric mechanism and converting PRKN to its fully-active form. According to another report, phosphorylation at Ser-65 by PINK1 is not essential for activation and only binding to phosphorylated ubiquitin is essential to unlock repression. In addition, ISG15 conjugation positively regulates its ubiquitin E3 ligase activity by suppressing the intramolecular interaction that maintains its autoinhibited conformation. Its function is as follows. Functions within a multiprotein E3 ubiquitin ligase complex, catalyzing the covalent attachment of ubiquitin moieties onto substrate proteins. Substrates include SYT11 and VDAC1. Other substrates are BCL2, CCNE1, GPR37, RHOT1/MIRO1, MFN1, MFN2, STUB1, SNCAIP, SEPTIN5, TOMM20, USP30, ZNF746, MIRO1 and AIMP2. Mediates monoubiquitination as well as 'Lys-6', 'Lys-11', 'Lys-48'-linked and 'Lys-63'-linked polyubiquitination of substrates depending on the context. Participates in the removal and/or detoxification of abnormally folded or damaged protein by mediating 'Lys-63'-linked polyubiquitination of misfolded proteins such as PARK7: 'Lys-63'-linked polyubiquitinated misfolded proteins are then recognized by HDAC6, leading to their recruitment to aggresomes, followed by degradation. Mediates 'Lys-63'-linked polyubiquitination of a 22 kDa O-linked glycosylated isoform of SNCAIP, possibly playing a role in Lewy-body formation. Mediates monoubiquitination of BCL2, thereby acting as a positive regulator of autophagy. Protects against mitochondrial dysfunction during cellular stress, by acting downstream of PINK1 to coordinate mitochondrial quality control mechanisms that remove and replace dysfunctional mitochondrial components. Depending on the severity of mitochondrial damage and/or dysfunction, activity ranges from preventing apoptosis and stimulating mitochondrial biogenesis to regulating mitochondrial dynamics and eliminating severely damaged mitochondria via mitophagy. Activation and recruitment onto the outer membrane of damaged/dysfunctional mitochondria (OMM) requires PINK1-mediated phosphorylation of both PRKN and ubiquitin. After mitochondrial damage, functions with PINK1 to mediate the decision between mitophagy or preventing apoptosis by inducing either the poly- or monoubiquitination of VDAC1, respectively; polyubiquitination of VDAC1 promotes mitophagy, while monoubiquitination of VDAC1 decreases mitochondrial calcium influx which ultimately inhibits apoptosis. When cellular stress results in irreversible mitochondrial damage, promotes the autophagic degradation of dysfunctional depolarized mitochondria (mitophagy) by promoting the ubiquitination of mitochondrial proteins such as TOMM20, RHOT1/MIRO1, MFN1 and USP30. Preferentially assembles 'Lys-6'-, 'Lys-11'- and 'Lys-63'-linked polyubiquitin chains, leading to mitophagy. The PINK1-PRKN pathway also promotes fission of damaged mitochondria by PINK1-mediated phosphorylation which promotes the PRKN-dependent degradation of mitochondrial proteins involved in fission such as MFN2. This prevents the refusion of unhealthy mitochondria with the mitochondrial network or initiates mitochondrial fragmentation facilitating their later engulfment by autophagosomes. Regulates motility of damaged mitochondria via the ubiquitination and subsequent degradation of MIRO1 and MIRO2; in motor neurons, this likely inhibits mitochondrial intracellular anterograde transport along the axons which probably increases the chance of the mitochondria undergoing mitophagy in the soma. Involved in mitochondrial biogenesis via the 'Lys-48'-linked polyubiquitination of transcriptional repressor ZNF746/PARIS which leads to its subsequent proteasomal degradation and allows activation of the transcription factor PPARGC1A. Limits the production of reactive oxygen species (ROS). Regulates cyclin-E during neuronal apoptosis. In collaboration with CHPF isoform 2, may enhance cell viability and protect cells from oxidative stress. Independently of its ubiquitin ligase activity, protects from apoptosis by the transcriptional repression of p53/TP53. May protect neurons against alpha synuclein toxicity, proteasomal dysfunction, GPR37 accumulation, and kainate-induced excitotoxicity. May play a role in controlling neurotransmitter trafficking at the presynaptic terminal and in calcium-dependent exocytosis. May represent a tumor suppressor gene. This chain is E3 ubiquitin-protein ligase parkin, found in Mus musculus (Mouse).